The sequence spans 518 residues: Arrestin-related trafficking adapter 10 (518 aa).

Lysine 118 is covalently cross-linked (Glycyl lysine isopeptide (Lys-Gly) (interchain with G-Cter in ubiquitin)).

It belongs to the ART10 family. In terms of assembly, interacts with RSP5. Post-translationally, ubiquitinated by RSP5.

The protein localises to the cytoplasm. Its function is as follows. May regulate endocytosis by recruiting RSP5 ubiquitin ligase activity to specific plasma membrane proteins in response to extracellular stimuli. The chain is Arrestin-related trafficking adapter 10 (ART10) from Saccharomyces cerevisiae (strain Lalvin EC1118 / Prise de mousse) (Baker's yeast).